The chain runs to 660 residues: Interferon-induced GTP-binding protein Mx1 (660 aa).

At M1 the chain carries N-acetylmethionine. Positions 1–10 (MVHSEAKMTR) are enriched in basic and acidic residues. Residues 1–29 (MVHSEAKMTRPDSASASKQQLLNGNADIQ) form a disordered region. Residues 12–29 (DSASASKQQLLNGNADIQ) are compositionally biased toward polar residues. Residues 67–340 (DLALPAIAVI…LITHISKSLP (274 aa)) enclose the Dynamin-type G domain. Residues 77-84 (GDQSSGKS) form a G1 motif region. Position 77–84 (77–84 (GDQSSGKS)) interacts with GTP. Residues 102–104 (VTR) are G2 motif. The interval 178 to 181 (DLPG) is G3 motif. Residues 178–182 (DLPGI) and 247–250 (TKPD) each bind GTP. Positions 247 to 250 (TKPD) are G4 motif. A G5 motif region spans residues 279 to 282 (KCRG). Positions 341-366 (LLENQIKESYQNLSDELQKYGTDIPE) are bundle signaling element (BSE). Residues 366–533 (EDETEKTFFL…HFQMEKIVYC (168 aa)) form a middle domain region. The stalk stretch occupies residues 367-630 (DETEKTFFLI…RDTYDWLLKE (264 aa)). A critical for lipid-binding region spans residues 554–557 (KKKK). Residues 572–660 (MAEILEHLNA…ARRRLAKFPG (89 aa)) enclose the GED domain.

Belongs to the TRAFAC class dynamin-like GTPase superfamily. Dynamin/Fzo/YdjA family. In terms of assembly, homooligomer. Oligomerizes into multimeric filamentous or ring-like structures by virtue of its stalk domain. Oligomerization is critical for GTPase activity, protein stability, and recognition of viral target structures. Interacts with TRPC1, TRPC3, TRPC4, TRPC5, TRPC6 and TRPC7. Interacts with HSPA5. Interacts with TUBB/TUBB5. Interacts with DDX39A and DDX39B. Post-translationally, ISGylated.

It localises to the cytoplasm. It is found in the endoplasmic reticulum membrane. The protein localises to the perinuclear region. Interferon-induced dynamin-like GTPase with antiviral activity. This chain is Interferon-induced GTP-binding protein Mx1 (MX1), found in Equus caballus (Horse).